The following is a 370-amino-acid chain: Lipoyl synthase, mitochondrial (370 aa).

[4Fe-4S] cluster contacts are provided by Cys-100, Cys-105, Cys-111, Cys-131, Cys-135, Cys-138, and Ser-346. One can recognise a Radical SAM core domain in the interval 116 to 335; the sequence is DKSRATATIM…KEVAEKLGFL (220 aa).

This sequence belongs to the radical SAM superfamily. Lipoyl synthase family. [4Fe-4S] cluster is required as a cofactor.

It localises to the mitochondrion. The catalysed reaction is [[Fe-S] cluster scaffold protein carrying a second [4Fe-4S](2+) cluster] + N(6)-octanoyl-L-lysyl-[protein] + 2 oxidized [2Fe-2S]-[ferredoxin] + 2 S-adenosyl-L-methionine + 4 H(+) = [[Fe-S] cluster scaffold protein] + N(6)-[(R)-dihydrolipoyl]-L-lysyl-[protein] + 4 Fe(3+) + 2 hydrogen sulfide + 2 5'-deoxyadenosine + 2 L-methionine + 2 reduced [2Fe-2S]-[ferredoxin]. It functions in the pathway protein modification; protein lipoylation via endogenous pathway; protein N(6)-(lipoyl)lysine from octanoyl-[acyl-carrier-protein]: step 2/2. Functionally, catalyzes the radical-mediated insertion of two sulfur atoms into the C-6 and C-8 positions of the octanoyl moiety bound to the lipoyl domains of lipoate-dependent enzymes, thereby converting the octanoylated domains into lipoylated derivatives. This Schizosaccharomyces pombe (strain 972 / ATCC 24843) (Fission yeast) protein is Lipoyl synthase, mitochondrial (lip5).